The following is a 106-amino-acid chain: Urease subunit beta (106 aa).

It belongs to the urease beta subunit family. Heterotrimer of UreA (gamma), UreB (beta) and UreC (alpha) subunits. Three heterotrimers associate to form the active enzyme.

It is found in the cytoplasm. The enzyme catalyses urea + 2 H2O + H(+) = hydrogencarbonate + 2 NH4(+). It participates in nitrogen metabolism; urea degradation; CO(2) and NH(3) from urea (urease route): step 1/1. This chain is Urease subunit beta, found in Parasynechococcus marenigrum (strain WH8102).